The chain runs to 185 residues: MLTLASKLKRDDGLKGSRTAATASDSTRRVSVRDKLLVKEVAELEANLPCTCKVHFPDPNKLHCFQLTVTPDEGYYQGGKFQFETEVPDAYNMVPPKVKCLTKIWHPNITETGEICLSLLREHSIDGTGWAPTRTLKDVVWGLNSLFTDLLNFDDPLNIEAAEHHLRDKEDFRNKVDDYIKRYAR.

At Met-1 the chain carries N-acetylmethionine. Residues 1–29 (MLTLASKLKRDDGLKGSRTAATASDSTRR) are interaction with UBA3. The 154-residue stretch at 32–185 (VRDKLLVKEV…VDDYIKRYAR (154 aa)) folds into the UBC core domain. Residue Cys-116 is the Glycyl thioester intermediate of the active site.

This sequence belongs to the ubiquitin-conjugating enzyme family. UBE2F subfamily. As to quaternary structure, interacts with UBA3 and RBX2. Interacts (N-terminally acetylated form) with (via DCUN1 domain) DCUN1D1, DCUN1D2, DCUN1D3, DCUN1D4 and DCUN1D5. The acetylation of Met-1 increases affinity for DCUN1D3 by about 2 orders of magnitude and is crucial for NEDD8 transfer to cullins. As to expression, widely expressed (at protein level).

The catalysed reaction is [E1 NEDD8-activating enzyme]-S-[NEDD8 protein]-yl-L-cysteine + [E2 NEDD8-conjugating enzyme]-L-cysteine = [E1 NEDD8-activating enzyme]-L-cysteine + [E2 NEDD8-conjugating enzyme]-S-[NEDD8-protein]-yl-L-cysteine.. It functions in the pathway protein modification; protein neddylation. Its function is as follows. Accepts the ubiquitin-like protein NEDD8 from the UBA3-NAE1 E1 complex and catalyzes its covalent attachment to other proteins. Together with the E3 ubiquitin ligase RNF7/RBX2, specifically neddylates cullin-5 (CUL5). Does not neddylate CUL1, CUL2, CUL3, CUL4A or CUL4B. Mediates neddylation of the CUL9-RBX1 complex. (Microbial infection) Following infection by HIV-1 virus, participates to HIV-1 Vif protein-mediated ubiquitination and degradation of APOBEC3G by mediating neddylation of cullin-5 (CUL5). The protein is NEDD8-conjugating enzyme UBE2F (UBE2F) of Homo sapiens (Human).